We begin with the raw amino-acid sequence, 53 residues long: VENIVIGHMEVVACADSRVSFNLVLTPAETVAYGNLPFDQQLVLCEIITHPNF.

The polypeptide is Unknown protein from 2D-PAGE of needles (Pinus pinaster (Maritime pine)).